We begin with the raw amino-acid sequence, 547 residues long: Chaperonin GroEL 1 (547 aa).

ATP contacts are provided by residues 30 to 33 (TLGP), K51, 87 to 91 (DGTTT), G415, and D496.

The protein belongs to the chaperonin (HSP60) family. As to quaternary structure, forms a cylinder of 14 subunits composed of two heptameric rings stacked back-to-back. Interacts with the co-chaperonin GroES.

It is found in the cytoplasm. The catalysed reaction is ATP + H2O + a folded polypeptide = ADP + phosphate + an unfolded polypeptide.. Functionally, together with its co-chaperonin GroES, plays an essential role in assisting protein folding. The GroEL-GroES system forms a nano-cage that allows encapsulation of the non-native substrate proteins and provides a physical environment optimized to promote and accelerate protein folding. The protein is Chaperonin GroEL 1 of Gluconacetobacter diazotrophicus (strain ATCC 49037 / DSM 5601 / CCUG 37298 / CIP 103539 / LMG 7603 / PAl5).